We begin with the raw amino-acid sequence, 178 residues long: CASP-like protein 2A2 (178 aa).

The Cytoplasmic segment spans residues 1 to 22 (MDKTDQTAIDGSALELNRTEKT). A helical membrane pass occupies residues 23–43 (VEAVLRVASMALSITGLVIMI). At 44–69 (KNSISNDFGSLSYSNLGAFMYLVGAN) the chain is on the extracellular side. Residues 70–90 (GVCAAYSLLSALAILALPCPI) traverse the membrane as a helical segment. Topologically, residues 91-96 (SKVQVR) are cytoplasmic. A helical transmembrane segment spans residues 97–117 (TLFLLDQVVTYVVLAAGAVSA). At 118-145 (ETVYLAYYGNIPITWSSACDSYGIFCHK) the chain is on the extracellular side. A helical transmembrane segment spans residues 146–166 (ALISVVFTFVVSLLYMLLSLI). Over 167–178 (SSYRLFSRFEAP) the chain is Cytoplasmic.

This sequence belongs to the Casparian strip membrane proteins (CASP) family. In terms of assembly, homodimer and heterodimers.

The protein resides in the cell membrane. This chain is CASP-like protein 2A2, found in Arabidopsis lyrata subsp. lyrata (Lyre-leaved rock-cress).